The primary structure comprises 105 residues: Zinc metalloproteinase/disintegrin (105 aa).

Residues 1–3 (DEP) enclose the Peptidase M12B domain. The region spanning 11–96 (PPVCGNYFVE…AECTDRFQRN (86 aa)) is the Disintegrin domain. Disulfide bonds link C25–C43, C27–C38, C37–C60, C51–C57, C56–C82, and C69–C89. A D/ECD-tripeptide motif is present at residues 75 to 77 (ECD). Residues 99–105 (PCQNNNG) constitute a propeptide that is removed on maturation.

The protein belongs to the venom metalloproteinase (M12B) family. P-III subfamily. As to quaternary structure, monomer. The cofactor is Zn(2+). Expressed by the venom gland.

It localises to the secreted. Its function is as follows. Impairs hemostasis in the envenomed animal. Inhibits platelet aggregation induced by ADP, thrombin, platelet-activating factor and collagen. Acts by inhibiting fibrinogen interaction with platelet receptors GPIIb/GPIIIa (ITGA2B/ITGB3). The sequence is that of Zinc metalloproteinase/disintegrin from Gloydius brevicauda (Korean slamosa snake).